Reading from the N-terminus, the 867-residue chain is V-set and immunoglobulin domain-containing protein 10-like (867 aa).

An N-terminal signal peptide occupies residues 1–27; that stretch reads MDNPQALPLFLLLASLVGILTLRASSG. Residues 28–776 are Extracellular-facing; sequence LQQTNFSSAF…RAGPTLSHGA (749 aa). The N-linked (GlcNAc...) asparagine glycan is linked to asparagine 32. Low complexity predominate over residues 35–45; the sequence is SAFSSDSKSSS. The disordered stretch occupies residues 35 to 60; that stretch reads SAFSSDSKSSSQGLGVEVPSIKPPSW. 3 N-linked (GlcNAc...) asparagine glycosylation sites follow: asparagine 88, asparagine 96, and asparagine 144. A disordered region spans residues 104 to 186; that stretch reads LSPVSPFSET…PESKFSAETH (83 aa). Over residues 137–153 the composition is skewed to polar residues; sequence TVKTPASNISTQVSHTK. Positions 159–170 are enriched in basic and acidic residues; the sequence is PDSKFSPDDMDL. Residues 173–186 are compositionally biased toward polar residues; it reads SAQSPESKFSAETH. 2 consecutive Ig-like C2-type domains span residues 302–394 and 402–487; these read PQLS…ADVS and PTIT…SLLN. Cysteine 324 and cysteine 378 form a disulfide bridge. Asparagine 423 carries an N-linked (GlcNAc...) asparagine glycan. The cysteines at positions 428 and 471 are disulfide-linked. Asparagine 487 carries an N-linked (GlcNAc...) asparagine glycan. Residues 602–627 form a disordered region; that stretch reads ASGCPPPSRASWAREGRPLAPGGGSR. N-linked (GlcNAc...) asparagine glycosylation is found at asparagine 641 and asparagine 650. Residues 777 to 797 traverse the membrane as a helical segment; sequence IAGIVLGSLLGLALLAVLLLL. Over 798–867 the chain is Cytoplasmic; the sequence is CICCLCRFRG…QAQTPVQLSL (70 aa).

In terms of tissue distribution, expressed in the esophagus, particularly in the suprabasilar layers of the epithelium. Expression is largely reduced in esophageal metaplasia, dysplasia, and adenocarcinoma lesions.

Its subcellular location is the membrane. The chain is V-set and immunoglobulin domain-containing protein 10-like (VSIG10L) from Homo sapiens (Human).